Here is a 121-residue protein sequence, read N- to C-terminus: Two-component response regulator ORR12 (121 aa).

The region spanning 5 to 121 (HVLVVDDTLV…VDLPRILNYI (117 aa)) is the Response regulatory domain. Residue aspartate 55 is modified to 4-aspartylphosphate.

The protein belongs to the ARR family. Type-A subfamily. Post-translationally, two-component system major event consists of a His-to-Asp phosphorelay between a sensor histidine kinase (HK) and a response regulator (RR). In plants, the His-to-Asp phosphorelay involves an additional intermediate named Histidine-containing phosphotransfer protein (HPt). This multistep phosphorelay consists of a His-Asp-His-Asp sequential transfer of a phosphate group between first a His and an Asp of the HK protein, followed by the transfer to a conserved His of the HPt protein and finally the transfer to an Asp in the receiver domain of the RR protein. In terms of tissue distribution, expressed in flowers and panicles.

Functions as a response regulator involved in His-to-Asp phosphorelay signal transduction system. Phosphorylation of the Asp residue in the receiver domain activates the ability of the protein to promote the transcription of target genes. Type-A response regulators seem to act as negative regulators of the cytokinin signaling. The polypeptide is Two-component response regulator ORR12 (Oryza sativa subsp. japonica (Rice)).